An 867-amino-acid chain; its full sequence is Piwi-like protein 1 (867 aa).

The span at 1–11 (MTGRARARARG) shows a compositional bias: basic residues. Positions 1–70 (MTGRARARAR…QRGPQDAPKT (70 aa)) are disordered. Positions 28–44 (AQKTLPSHPSEQRQSLQ) are enriched in polar residues. The PAZ domain maps to 286–397 (TVLDFMYSLY…LIPELCYLTG (112 aa)). The required for binding 2'-O-methylated 3'-end of piRNAs stretch occupies residues 324 to 326 (TYR). The segment at 485–621 (SRETRVAPLI…LQMNCKMGGE (137 aa)) is MID region. In terms of domain architecture, Piwi spans 561–853 (IVVCILSSTR…LAFLVGQSIH (293 aa)). Catalysis depends on residues Asp638, Glu676, Asp708, and His842.

This sequence belongs to the argonaute family. Piwi subfamily. The cofactor is Mg(2+). Post-translationally, methylated on arginine residues; required for the interaction with Tudor domain-containing protein and subsequent localization to the meiotic nuage, also named P granule.

The protein localises to the cytoplasm. Its function is as follows. Endoribonuclease that plays a central role in postnatal germ cells by repressing transposable elements and preventing their mobilization, which is essential for the germline integrity. Acts via the piRNA metabolic process, which mediates the repression of transposable elements during meiosis by forming complexes composed of piRNAs and Piwi proteins and govern the methylation and subsequent repression of transposons. Directly binds methylated piRNAs, a class of 24 to 30 nucleotide RNAs that are generated by a Dicer-independent mechanism and are primarily derived from transposons and other repeated sequence elements. Strongly prefers a uridine in the first position of their guide (g1U preference, also named 1U-bias). Besides their function in transposable elements repression, piRNAs are probably involved in other processes during meiosis such as translation regulation. Not involved in the piRNA amplification loop, also named ping-pong amplification cycle. Acts as an endoribonuclease that cleaves transposon messenger RNAs. This is Piwi-like protein 1 (PIWIL1) from Gallus gallus (Chicken).